The chain runs to 118 residues: Ribosome-binding factor A (118 aa).

It belongs to the RbfA family. As to quaternary structure, monomer. Binds 30S ribosomal subunits, but not 50S ribosomal subunits or 70S ribosomes.

It is found in the cytoplasm. Its function is as follows. One of several proteins that assist in the late maturation steps of the functional core of the 30S ribosomal subunit. Associates with free 30S ribosomal subunits (but not with 30S subunits that are part of 70S ribosomes or polysomes). Required for efficient processing of 16S rRNA. May interact with the 5'-terminal helix region of 16S rRNA. This is Ribosome-binding factor A from Geobacter metallireducens (strain ATCC 53774 / DSM 7210 / GS-15).